The chain runs to 20 residues: Catechol 1,2-dioxygenase (20 aa).

It belongs to the intradiol ring-cleavage dioxygenase family. As to quaternary structure, homodimer which dissociates into active monomeric subunits at high ionic strengths. Fe(3+) serves as cofactor.

It catalyses the reaction catechol + O2 = cis,cis-muconate + 2 H(+). It functions in the pathway aromatic compound metabolism; beta-ketoadipate pathway; 5-oxo-4,5-dihydro-2-furylacetate from catechol: step 1/3. In Acinetobacter radioresistens, this protein is Catechol 1,2-dioxygenase.